A 1343-amino-acid polypeptide reads, in one-letter code: Vascular endothelial growth factor receptor 2 (1343 aa).

A signal peptide spans 1 to 19 (MESRALLAVALWFCVETRA). The Extracellular portion of the chain corresponds to 20 to 760 (ASVGLPGDSL…EGVQEKTNLE (741 aa)). 5 N-linked (GlcNAc...) asparagine glycosylation sites follow: Asn46, Asn96, Asn143, Asn158, and Asn245. Ig-like C2-type domains follow at residues 46–109 (NTTL…RDTD), 141–207 (NKNK…INDE), 224–320 (YDVV…KNKT), 328–414 (PFIA…HMVS), 421–540 (PQIG…RVIS), 547–654 (PEIT…LVKQ), and 663–749 (PMIT…TLFI). A disulfide bridge links Cys53 with Cys103. A disulfide bridge links Cys150 with Cys200. Residues Cys246 and Cys307 are joined by a disulfide bond. Residues Asn318, Asn374, Asn395, Asn507, Asn576, Asn609, Asn615, Asn627, Asn671, Asn700, and Asn717 are each glycosylated (N-linked (GlcNAc...) asparagine). 2 disulfides stabilise this stretch: Cys445/Cys526 and Cys567/Cys638. A disulfide bridge links Cys684 with Cys733. A helical membrane pass occupies residues 761-781 (VIILVGTAVIAMFFWLLLVIL). Residues 782–1343 (VRTVKRANEG…SGTTLRSSPV (562 aa)) lie on the Cytoplasmic side of the membrane. Position 797 is a phosphotyrosine (Tyr797). Positions 830-1158 (LKLGKPLGRG…FSELVEHLGN (329 aa)) constitute a Protein kinase domain. ATP-binding positions include 836–844 (LGRGAFGQV) and Lys864. Phosphotyrosine; by autocatalysis is present on Tyr947. Phosphoserine occurs at positions 978 and 980. Residue Tyr992 is modified to Phosphotyrosine; by autocatalysis. The cysteines at positions 1020 and 1041 are disulfide-linked. Asp1024 acts as the Proton acceptor in catalysis. Phosphotyrosine; by autocatalysis occurs at positions 1050, 1055, 1171, and 1210. A phosphoserine mark is found at Ser1227 and Ser1231. At Thr1234 the chain carries Phosphothreonine. The interval 1267–1314 (TLEDRNKLSPSFGGMMPSKSRESVASEGSNQTSGYQSGYHSDDTDTTV) is disordered. The span at 1292 to 1305 (SEGSNQTSGYQSGY) shows a compositional bias: polar residues. 3 positions are modified to phosphotyrosine; by autocatalysis: Tyr1301, Tyr1305, and Tyr1315.

It belongs to the protein kinase superfamily. Tyr protein kinase family. CSF-1/PDGF receptor subfamily. In terms of assembly, homodimer in the presence of bound dimeric VEGFA, VEGFC or VEGFD ligands; monomeric in the absence of bound ligands. Can also form heterodimers with FLT1/VEGFR1 and KDR/VEGFR2. Interacts (tyrosine phosphorylated) with LFYN, NCK1, PLCG1. Interacts (tyrosine-phosphorylated active form preferentially) with DAB2IP (via C2 domain and active form preferentially); the interaction occurs at the late phase of VEGFA response and inhibits KDR/VEGFR2 activity. Interacts with SHBSH2D2A/TSAD, GRB2, MYOF, CBL and PDCD6. Interacts (via C-terminus domain) with ERN1 (via kinase domain); the interaction is facilitated in a XBP1- and vascular endothelial growth factor (VEGF)-dependent manner in endothelial cells. Interacts (via juxtamembrane region) with chaperone PDCL3 (via thioredoxin fold region); the interaction leads to increased KDR/VEGFR2 abundance through inhibition of its ubiquitination and degradation. Interacts (tyrosine phosphorylated) with CCDC88A/GIV (via SH2-like region); binding requires autophosphorylation of the KDR/VEGFR2 C-terminal region. Interacts with isoform 2 of BSG. Interacts with SLC31A1; this interaction is induced upon VEGFA stimulation leading to SLC31A1 and KDR subsequent co-internalization to early endosomes, thereby activating KDR downstream signaling in endothelial cells. In terms of processing, N-glycosylated. Ubiquitinated. Tyrosine phosphorylation of the receptor promotes its poly-ubiquitination, leading to its degradation via the proteasome or lysosomal proteases. Post-translationally, autophosphorylated on tyrosine residues upon ligand binding. Autophosphorylation occurs in trans, i.e. one subunit of the dimeric receptor phosphorylates tyrosine residues on the other subunit. Phosphorylation at Tyr-947 is important for interaction with SH2D2A/TSAD and VEGFA-mediated reorganization of the actin cytoskeleton. Phosphorylation at Tyr-1171 is important for interaction with PLCG1 and SHB. Phosphorylation at Tyr-1210 is important for interaction with NCK1 and FYN. Dephosphorylated by PTPRB. Dephosphorylated by PTPRJ at Tyr-797, Tyr-947, Tyr-992, Tyr-1050, Tyr-1055, Tyr-1171 and Tyr-1210. In terms of processing, the inhibitory disulfide bond between Cys-1020 and Cys-1041 may serve as a specific molecular switch for H(2)S-induced modification that regulates KDR/VEGFR2 function. Expressed in the post-pubertal mammary glands.

The protein localises to the cell membrane. It localises to the cytoplasm. The protein resides in the nucleus. Its subcellular location is the cytoplasmic vesicle. It is found in the early endosome. The protein localises to the cell junction. It localises to the endoplasmic reticulum. It catalyses the reaction L-tyrosyl-[protein] + ATP = O-phospho-L-tyrosyl-[protein] + ADP + H(+). Its activity is regulated as follows. Present in an inactive conformation in the absence of bound ligand. Binding of VEGFA, VEGFC or VEGFD leads to dimerization and activation by autophosphorylation on tyrosine residues. May be regulated by hydrogen sulfide (H(2)S) levels via a sensitive intracellular disulfide bond. Tyrosine-protein kinase that acts as a cell-surface receptor for VEGFA, VEGFC and VEGFD. Plays an essential role in the regulation of angiogenesis, vascular development, vascular permeability, and embryonic hematopoiesis. Promotes proliferation, survival, migration and differentiation of endothelial cells. Promotes reorganization of the actin cytoskeleton. Isoforms lacking a transmembrane domain may function as decoy receptors for VEGFA, VEGFC and/or VEGFD. Modulates FLT1 and FLT4 signaling by forming heterodimers. Binding of vascular growth factors to isoform 1 leads to the activation of several signaling cascades. Activation of PLCG1 leads to the production of the cellular signaling molecules diacylglycerol and inositol-1,4,5-trisphosphate and the activation of protein kinase C. Mediates activation of MAPK1/ERK2, MAPK3/ERK1 and the MAP kinase signaling pathway, as well as of the AKT1 signaling pathway. Mediates phosphorylation of PIK3R1, the regulatory subunit of phosphatidylinositol 3-kinase, reorganization of the actin cytoskeleton and activation of PTK2/FAK1. Required for VEGFA-mediated induction of NOS2 and NOS3, leading to the production of the signaling molecule nitric oxide (NO) by endothelial cells. Phosphorylates PLCG1. Promotes phosphorylation of FYN, NCK1, NOS3, PIK3R1, PTK2/FAK1 and SRC. This chain is Vascular endothelial growth factor receptor 2, found in Rattus norvegicus (Rat).